The sequence spans 657 residues: Major core protein 4b (657 aa).

The propeptide occupies 1–61 (MESDSNIAIE…ITEEDVISAG (61 aa)).

The protein belongs to the poxviridae protein P4b family. In terms of processing, the precursor is cleaved to a mature protein during virion maturation. Proteolytic cleavage of major core proteins P4a (A10L), P4b (A3L), and VP8 (L4R), which occurs at a late stage of core formation, is required for production of infectious mature virions (MV).

The protein localises to the virion. Major component of the virion core that undergoes proteolytic processing during the immature virion (IV) to mature virion (MV) transition. Essential for the formation of a structurally normal core. The sequence is that of Major core protein 4b from Vertebrata (FPV).